A 937-amino-acid polypeptide reads, in one-letter code: MTSKIQGKKPTLSRRDFIKSAAAASAAASVGLSIPSVMSAEAQNAQKLWKWDKSVCRFCGTGCGIMVATQKDNTGQAKIVAIKGDPEAPVNRGLNCIKGYFCAKIMYGADRLTTPLLRVNSNGEFDKKGKFAPVSWKRAFDEMEKQFKKAYNELGPTGIAVFGSGQYTIQEGYAAVKLVKGGFRSNNIDPNARHCMASAVVGFMETFGIDEPAGCYDDIELTDTIVTWGANMAEMHPVLWSRVTDRKLSSSNVKVINLSTYTNRTSDLADIEIIFKPHTDLAIWNFLAREIINRNAVDEAFVKENCVFSTGFVNIGYGMRNNPQHPKFKPEERDIVAKEVSKIVSNDEGITLQYLGIKAGEEMKMDKAGAAGNHWGISFEDFKKGLEPYTLDFVANLAKGNPDESIESFKQKLQSLADYYIDKNRKIVSFWTMGMNQHQRGTWVNEQSYMVHMLLGKQAKPGSGAFSLTGQPSACGTAREVGTFSHRLPADMVVANPKHREITEKIWHLPSGTLNSKIGAPYLKIMRDLEDGNIKWAWVQVNNPWQNTANANHWIAAAREQDNFIVVSECYPGISAKVADLILPTAMIYEKWGAYGNAERRTQHWKQQVVAPGEAMPDIWQMAEFAKRFKLSEVWDKGYEALDIKPVLESAKAMGYTEEDTLFDVLFANKNAKNFSAQDALLKNEFNTEVLGDSRNVEDGNGEAFKGYGFFIQKYLWEEYRQFGLGHAHDLADFDTYHRVRGLRWPVVNGKETQWRFNAKYDFYAQKLGNGKAFAFYGNKGKDMPAGSLNAPSEEKVSIDNKAKIFLRPYMDPCEMPDKEYPMWLCTGRVLEHWHSGTMTMRVPELYRAVPEALCYMHPDDANAQNLEQNQVVWVESRRGKVKAKLDLRGRNRPPKGLIYVPWFDENVFINKVCLDATCPISKQTDFKKCAVKVYKA.

Residues 1-42 constitute a signal peptide (tat-type signal); the sequence is MTSKIQGKKPTLSRRDFIKSAAAASAAASVGLSIPSVMSAEA. In terms of domain architecture, 4Fe-4S Mo/W bis-MGD-type spans 49-110; the sequence is WKWDKSVCRF…FCAKIMYGAD (62 aa). Cys56, Cys59, Cys63, and Cys96 together coordinate [4Fe-4S] cluster. Mo-bis(molybdopterin guanine dinucleotide) contacts are provided by residues Lys98, Gln166, Asn191, Cys195, 228-235, Met433, Gln437, Asn543, 568-569, Lys591, Asp618, and 827-836; these read WGANMAEM, SE, and TGRVLEHWHS. Trp903 contributes to the substrate binding site. Positions 911 and 928 each coordinate Mo-bis(molybdopterin guanine dinucleotide).

This sequence belongs to the prokaryotic molybdopterin-containing oxidoreductase family. NasA/NapA/NarB subfamily. Component of the periplasmic nitrate reductase NapAB complex composed of NapA and NapB. [4Fe-4S] cluster is required as a cofactor. It depends on Mo-bis(molybdopterin guanine dinucleotide) as a cofactor. In terms of processing, predicted to be exported by the Tat system. The position of the signal peptide cleavage has not been experimentally proven.

Its subcellular location is the periplasm. The enzyme catalyses 2 Fe(II)-[cytochrome] + nitrate + 2 H(+) = 2 Fe(III)-[cytochrome] + nitrite + H2O. In terms of biological role, catalytic subunit of the periplasmic nitrate reductase complex NapAB. Receives electrons from NapB and catalyzes the reduction of nitrate to nitrite. This is Periplasmic nitrate reductase from Helicobacter hepaticus (strain ATCC 51449 / 3B1).